We begin with the raw amino-acid sequence, 410 residues long: Elongation factor Tu, chloroplastic (410 aa).

The 205-residue stretch at 10-214 folds into the tr-type G domain; the sequence is KPHVNIGTIG…QVDAYIPTPE (205 aa). The segment at 19–26 is G1; that stretch reads GHVDHGKT. 19–26 provides a ligand contact to GTP; sequence GHVDHGKT. T26 is a Mg(2+) binding site. The interval 60–64 is G2; the sequence is GITIN. Residues 81-84 form a G3 region; the sequence is DCPG. Residues 81–85 and 136–139 each bind GTP; these read DCPGH and NKED. The segment at 136-139 is G4; sequence NKED. The G5 stretch occupies residues 174–176; that stretch reads SAL.

The protein belongs to the TRAFAC class translation factor GTPase superfamily. Classic translation factor GTPase family. EF-Tu/EF-1A subfamily.

The protein resides in the plastid. Its subcellular location is the chloroplast. The catalysed reaction is GTP + H2O = GDP + phosphate + H(+). GTP hydrolase that promotes the GTP-dependent binding of aminoacyl-tRNA to the A-site of ribosomes during protein biosynthesis. In Chlorokybus atmophyticus (Soil alga), this protein is Elongation factor Tu, chloroplastic (tufA).